A 421-amino-acid chain; its full sequence is UDP-N-acetylglucosamine 1-carboxyvinyltransferase (421 aa).

22–23 (KN) contacts phosphoenolpyruvate. Position 93 (R93) interacts with UDP-N-acetyl-alpha-D-glucosamine. C117 acts as the Proton donor in catalysis. C117 is modified (2-(S-cysteinyl)pyruvic acid O-phosphothioketal). UDP-N-acetyl-alpha-D-glucosamine is bound by residues 122–126 (RPVDL), D308, and I330.

It belongs to the EPSP synthase family. MurA subfamily.

The protein localises to the cytoplasm. The catalysed reaction is phosphoenolpyruvate + UDP-N-acetyl-alpha-D-glucosamine = UDP-N-acetyl-3-O-(1-carboxyvinyl)-alpha-D-glucosamine + phosphate. It participates in cell wall biogenesis; peptidoglycan biosynthesis. Its function is as follows. Cell wall formation. Adds enolpyruvyl to UDP-N-acetylglucosamine. The polypeptide is UDP-N-acetylglucosamine 1-carboxyvinyltransferase (Pseudomonas putida (strain ATCC 700007 / DSM 6899 / JCM 31910 / BCRC 17059 / LMG 24140 / F1)).